Consider the following 345-residue polypeptide: Centromere protein U (345 aa).

Basic residues-rich tracts occupy residues Met-1–Asn-10 and His-19–Phe-29. 2 disordered regions span residues Met-1–Val-37 and Ala-64–Gln-153. Residues Asn-88–Glu-106 show a composition bias toward basic and acidic residues. Residues Ser-142 to Val-152 are compositionally biased toward low complexity. Positions Cys-201–Asn-294 form a coiled coil. Residues Lys-222–Leu-239 carry the Nuclear localization signal motif.

This sequence belongs to the CENP-U/AME1 family. In terms of assembly, interacts with CENPH-CENPI complex at the kinetochore.

The protein localises to the nucleus. It localises to the chromosome. It is found in the centromere. Probable component of a centromeric complex involved in assembly of kinetochore proteins, mitotic progression and chromosome segregation. Required for maintenance of sister chromatid adhesion during mitotic checkpoint activation. This Gallus gallus (Chicken) protein is Centromere protein U (CENPU).